We begin with the raw amino-acid sequence, 91 residues long: DNA-directed RNA polymerase subunit omega (91 aa).

The disordered stretch occupies residues 66–91; it reads QMPPPLPNFPGAANREATGAEDAAGE.

The protein belongs to the RNA polymerase subunit omega family. In terms of assembly, the RNAP catalytic core consists of 2 alpha, 1 beta, 1 beta' and 1 omega subunit. When a sigma factor is associated with the core the holoenzyme is formed, which can initiate transcription.

It catalyses the reaction RNA(n) + a ribonucleoside 5'-triphosphate = RNA(n+1) + diphosphate. Promotes RNA polymerase assembly. Latches the N- and C-terminal regions of the beta' subunit thereby facilitating its interaction with the beta and alpha subunits. This is DNA-directed RNA polymerase subunit omega from Acidithiobacillus ferrooxidans (strain ATCC 23270 / DSM 14882 / CIP 104768 / NCIMB 8455) (Ferrobacillus ferrooxidans (strain ATCC 23270)).